The chain runs to 221 residues: UPF0758 protein CGSHiEE_07200 (221 aa).

One can recognise an MPN domain in the interval 99-221 (IINDPETVKL…CYSFAENCLL (123 aa)). Residues His170, His172, and Asp183 each coordinate Zn(2+). The short motif at 170–183 (HNHPSGVTEPSYSD) is the JAMM motif element.

This sequence belongs to the UPF0758 family.

The protein is UPF0758 protein CGSHiEE_07200 of Haemophilus influenzae (strain PittEE).